A 171-amino-acid chain; its full sequence is uncharacterized protein (171 aa).

The protein belongs to the mimivirus R24/R907 family.

This is an uncharacterized protein from Acanthamoeba polyphaga (Amoeba).